Here is a 385-residue protein sequence, read N- to C-terminus: Bifunctional chorismate mutase/prephenate dehydratase (385 aa).

A Chorismate mutase domain is found at 1 to 92 (MPANNSLLIF…ESVATQKKLL (92 aa)). The substrate site is built by Arg-11, Arg-28, Lys-39, Asp-48, Glu-52, Ser-84, and Gln-88. Positions 105–285 (NFSFLGPKGS…NITRFILLNR (181 aa)) constitute a Prephenate dehydratase domain. Residues 286–385 (NPKKISKNIP…PSEKITPIAP (100 aa)) form a regulatory region. The ACT domain occupies 299-376 (TLIFTTGQEA…RFIKILGCYP (78 aa)).

It localises to the cytoplasm. It carries out the reaction chorismate = prephenate. It catalyses the reaction prephenate + H(+) = 3-phenylpyruvate + CO2 + H2O. Its pathway is amino-acid biosynthesis; L-phenylalanine biosynthesis; phenylpyruvate from prephenate: step 1/1. It participates in metabolic intermediate biosynthesis; prephenate biosynthesis; prephenate from chorismate: step 1/1. Functionally, catalyzes the Claisen rearrangement of chorismate to prephenate and the decarboxylation/dehydration of prephenate to phenylpyruvate. The polypeptide is Bifunctional chorismate mutase/prephenate dehydratase (pheA) (Buchnera aphidicola subsp. Acyrthosiphon pisum (strain APS) (Acyrthosiphon pisum symbiotic bacterium)).